We begin with the raw amino-acid sequence, 899 residues long: Tuberous sclerosis 1 protein homolog (899 aa).

Coiled-coil stretches lie at residues 540–706 (LSST…CVNI) and 737–847 (SDEQ…ELKN). The interval 874-899 (NDSLHPKVGPPRRQSTDTSRSTFRQY) is disordered. A compositionally biased stretch (polar residues) spans 889–899 (TDTSRSTFRQY).

Interacts with tsc2.

It localises to the cytoplasm. In terms of biological role, together with tsc2, required for uptake of various amino acids from the environment and for proper conjugation. Involved in induction of gene expression of permeases and genes required for meiosis upon nitrogen starvation. May act as a GTPase-activating protein (GAP) for the small GTPase rhb1. In Schizosaccharomyces pombe (strain 972 / ATCC 24843) (Fission yeast), this protein is Tuberous sclerosis 1 protein homolog (tsc1).